A 316-amino-acid polypeptide reads, in one-letter code: tRNA dimethylallyltransferase (316 aa).

An ATP-binding site is contributed by 17-24; it reads GPTASGKT. 19–24 serves as a coordination point for substrate; sequence TASGKT. 4 interaction with substrate tRNA regions span residues 42-45, 166-170, 247-252, and 280-287; these read DSAL, QRLSR, RCVGYR, and KRQITWLR.

It belongs to the IPP transferase family. In terms of assembly, monomer. The cofactor is Mg(2+).

The catalysed reaction is adenosine(37) in tRNA + dimethylallyl diphosphate = N(6)-dimethylallyladenosine(37) in tRNA + diphosphate. Catalyzes the transfer of a dimethylallyl group onto the adenine at position 37 in tRNAs that read codons beginning with uridine, leading to the formation of N6-(dimethylallyl)adenosine (i(6)A). The protein is tRNA dimethylallyltransferase of Enterobacter sp. (strain 638).